A 662-amino-acid chain; its full sequence is Probable quinol oxidase subunit 1 (662 aa).

A run of 2 helical transmembrane segments spans residues tryptophan 14–isoleucine 34 and isoleucine 56–leucine 76. Histidine 102 contacts Fe(II)-heme a. 8 helical membrane passes run glycine 103 to isoleucine 123, valine 140 to glycine 160, isoleucine 187 to isoleucine 207, phenylalanine 228 to methionine 248, phenylalanine 273 to tyrosine 293, methionine 311 to phenylalanine 331, glycine 336 to valine 356, and methionine 376 to leucine 396. Cu cation contacts are provided by histidine 279, tyrosine 283, histidine 328, and histidine 329. The segment at residues histidine 279–tyrosine 283 is a cross-link (1'-histidyl-3'-tyrosine (His-Tyr)). Histidine 414 contributes to the heme a3 binding site. The next 5 membrane-spanning stretches (helical) occupy residues phenylalanine 415–tyrosine 435, cysteine 451–leucine 471, phenylalanine 492–isoleucine 512, proline 587–isoleucine 604, and isoleucine 608–phenylalanine 627. Histidine 416 serves as a coordination point for Fe(II)-heme a.

It belongs to the heme-copper respiratory oxidase family. The cofactor is Cu cation. It depends on ferriheme a as a cofactor. Heme A3. is required as a cofactor.

The protein localises to the cell membrane. The enzyme catalyses 2 a quinol + O2 = 2 a quinone + 2 H2O. It functions in the pathway energy metabolism; oxidative phosphorylation. Functionally, catalyzes quinol oxidation with the concomitant reduction of oxygen to water. The chain is Probable quinol oxidase subunit 1 (qoxB) from Staphylococcus epidermidis (strain ATCC 35984 / DSM 28319 / BCRC 17069 / CCUG 31568 / BM 3577 / RP62A).